A 768-amino-acid polypeptide reads, in one-letter code: P-selectin (768 aa).

Residues 1-41 form the signal peptide; it reads MAGCPKGSWTPRLRSVILGGAQLIWFSALISELVNQKEVAA. Topologically, residues 42-709 are extracellular; sequence WTYNYSTKAY…QAGTLTIQEA (668 aa). A C-type lectin domain is found at 58 to 158; the sequence is VFCRRHFTDL…PCFKRKRALC (101 aa). 21 cysteine pairs are disulfide-bonded: cysteine 60–cysteine 158, cysteine 131–cysteine 150, cysteine 163–cysteine 174, cysteine 168–cysteine 183, cysteine 185–cysteine 194, cysteine 200–cysteine 244, cysteine 230–cysteine 257, cysteine 262–cysteine 306, cysteine 292–cysteine 319, cysteine 324–cysteine 368, cysteine 354–cysteine 381, cysteine 386–cysteine 430, cysteine 416–cysteine 443, cysteine 448–cysteine 492, cysteine 478–cysteine 505, cysteine 510–cysteine 554, cysteine 540–cysteine 567, cysteine 580–cysteine 624, cysteine 610–cysteine 637, cysteine 642–cysteine 686, and cysteine 672–cysteine 699. Residues glutamate 121, asparagine 123, and asparagine 124 each contribute to the Ca(2+) site. Asparagine 123 provides a ligand contact to a carbohydrate. A carbohydrate contacts are provided by glutamate 133 and asparagine 146. Residues asparagine 146 and aspartate 147 each contribute to the Ca(2+) site. In terms of domain architecture, EGF-like spans 159–195; sequence YTASCQDMSCSNQGECIETIGSYTCSCYPGFYGPECE. Sushi domains are found at residues 198–259, 260–321, 322–383, 384–445, 446–507, 508–569, 578–639, and 640–701; these read KECG…KCDA, VQCQ…TCEA, IACE…FCEA, LQCP…ECQA, VSCA…TCEA, IKCP…TCKG, VRCP…MCRA, and VKCS…TCQA. A glycan (N-linked (GlcNAc...) asparagine) is linked at asparagine 398. Asparagine 603 carries N-linked (GlcNAc...) asparagine glycosylation. N-linked (GlcNAc...) asparagine glycosylation is found at asparagine 654, asparagine 661, and asparagine 679. Residues 710-733 traverse the membrane as a helical segment; it reads LTYLGGAVASTTGLAVGGTLLALL. The Cytoplasmic segment spans residues 734-768; the sequence is RKRLRKKDDGKCPLNPHSHLGTYGVFTNAAYDPTP. Cysteine 745 carries S-palmitoyl cysteine; alternate lipidation. Cysteine 745 carries the S-stearoyl cysteine; alternate lipid modification. The Endocytosis signal signature appears at 756 to 759; it reads YGVF. The interaction with SNX17 stretch occupies residues 759-768; sequence FTNAAYDPTP.

It belongs to the selectin/LECAM family. Interacts with SNX17. Interacts with SELPLG/PSGL1 and PODXL2 and mediates neutrophil adhesion and leukocyte rolling. This interaction requires the sialyl-Lewis X epitope of SELPLG and PODXL2, and specific tyrosine sulfation on SELPLG. Interacts (via C-type lectin domain) with alpha-IIb/beta3 integrin ITGA2B:ITGB3 and alpha-V/beta-3 integrin ITGAV:ITGB3. Interacts with alpha5/beta1 integrin ITGA5:ITGB1 and alpha4/beta1 integrin ITGA4:ITGB. As to expression, stored in the alpha-granules of platelets and Weibel-Palade bodies of endothelial cells. Upon cell activation by agonists, P-selectin is transported rapidly to the cell surface.

Its subcellular location is the cell membrane. Functionally, ca(2+)-dependent receptor for myeloid cells that binds to carbohydrates on neutrophils and monocytes. Mediates the interaction of activated endothelial cells or platelets with leukocytes. The ligand recognized is sialyl-Lewis X. Mediates rapid rolling of leukocyte rolling over vascular surfaces during the initial steps in inflammation through interaction with SELPLG. Mediates cell-cell interactions and cell adhesion via the interaction with integrin alpha-IIb/beta3 (ITGA2B:ITGB3) and integrin alpha-V/beta-3 (ITGAV:ITGB3). This Mus musculus (Mouse) protein is P-selectin (Selp).